The sequence spans 496 residues: Apulose kinase (496 aa).

ATP contacts are provided by residues 13 to 15, Thr-267, Gly-308, and 408 to 412; these read TTN and GATQN.

It belongs to the FGGY kinase family.

It catalyses the reaction apulose + ATP = apulose 4-phosphate + ADP + H(+). It participates in carbohydrate metabolism. In terms of biological role, involved in catabolism of D-apiose. Catalyzes phosphorylation of apulose to form apulose 4-phosphate. In Pectobacterium atrosepticum (strain SCRI 1043 / ATCC BAA-672) (Erwinia carotovora subsp. atroseptica), this protein is Apulose kinase.